The sequence spans 354 residues: Protein RecA (354 aa).

Residue 65–72 (GPESSGKT) participates in ATP binding.

Belongs to the RecA family.

It is found in the cytoplasm. Its function is as follows. Can catalyze the hydrolysis of ATP in the presence of single-stranded DNA, the ATP-dependent uptake of single-stranded DNA by duplex DNA, and the ATP-dependent hybridization of homologous single-stranded DNAs. It interacts with LexA causing its activation and leading to its autocatalytic cleavage. This is Protein RecA from Aeromonas hydrophila subsp. hydrophila (strain ATCC 7966 / DSM 30187 / BCRC 13018 / CCUG 14551 / JCM 1027 / KCTC 2358 / NCIMB 9240 / NCTC 8049).